A 420-amino-acid chain; its full sequence is MNYIKVKGTYDVLPTEAENWVALESYVRKLFKTYNYGEIRTPMMEYSNVIHRETELSDMVIKETYNFKDKSDRDLTLRPEGTAGVIRSYVENKLYAQAGVTKLYYMGPNFRYERPQKGRFRQFMQFGCEVLGSNEPSIDAEVIELAYETIYRLGLKQVSVKLNSLGDDASKANYRQALIDFLTPVKDKLSKDSQDRLTHNPLRILDSKDTADIELIKNAPLPLDYLNETSKQHFDSVLELLNLMNIPYEIDRKLVRGLDYYAHTVFEIHATIKGFGAQNALGGGGRYQNLVKELGGPDTPGIGYAFGMERLLSALEQEGITLTSPKQLDVYFITFDQQSRKKAIQLQHILRSENILSDIDHLNRGFKPQLKEALRYDSKFIIIIGENELNNNVVQLKNTKTEEQVEVSMDTLLDTLKELL.

This sequence belongs to the class-II aminoacyl-tRNA synthetase family. Homodimer.

The protein resides in the cytoplasm. The enzyme catalyses tRNA(His) + L-histidine + ATP = L-histidyl-tRNA(His) + AMP + diphosphate + H(+). This is Histidine--tRNA ligase from Acholeplasma laidlawii (strain PG-8A).